A 216-amino-acid polypeptide reads, in one-letter code: Ras-related protein Rab-11A (216 aa).

An N-acetylglycine modification is found at Gly-2. GTP is bound by residues Ser-20, Gly-21, Val-22, Gly-23, Lys-24, Ser-25, Asn-26, Asn-37, Leu-38, Ser-40, Ser-42, and Thr-43. Ser-25 is a Mg(2+) binding site. Residues Phe-36 to Glu-47 carry the Switch 1 motif. Mg(2+)-binding residues include Thr-43 and Asp-66. Positions Thr-67 to Gly-86 match the Switch 2 motif. The GTP site is built by Gly-69, Asn-124, Lys-125, Asp-127, Ala-155, and Leu-156. A disordered region spans residues Asp-183 to Lys-207. 2 S-geranylgeranyl cysteine lipidation sites follow: Cys-212 and Cys-213. The residue at position 213 (Cys-213) is a Cysteine methyl ester. Residues Gln-214–Ile-216 constitute a propeptide, removed in mature form.

Belongs to the small GTPase superfamily. Rab family. As to quaternary structure, interacts (GTP-bound form) with RAB11FIPs (via their C-termini) including RAB11FIP1, RAB11FIP2, RAB11FIP3, RAB11FIP4 and RAB11FIP5 effectors. Forms a complex with RAB11FIP3 and dynein intermediate chain DYNC1LI1; the interaction between RAB11A1 and RAB11FIP3 is direct; the complex regulates endocytic trafficking. Interacts with EVI5; EVI5 and RAB11FIP3 may be mutually exclusive and compete for binding RAB11A. Interacts with SGSM1, SGSM2, SGSM3 and VIPAS39. Interacts with EXOC6 in a GTP-dependent manner. Interacts with RAB11FIP5. Interacts with STXBP6. Interacts (GDP-bound form) with ZFYVE27. Interacts with BIRC6/bruce. May interact with TBC1D14. Interacts with UNC119; in a cell cycle-dependent manner. GDP-bound and nucleotide-free forms interact with SH3BP5. Interacts (GDP-bound form) with KIF5A in a ZFYVE27-dependent manner. Interacts (GDP-bound form) with RELCH. Found in a complex composed of RELCH, OSBP1 and RAB11A. Interacts with TBC1D12. Interacts with DEF6. Interacts with ATP9A. Forms a heterotetramer with RAB11FIP3; the GTP-bound form is preferred for binding. Forms a complex with Rabin8/RAB3IP and RAB11FIP3, probably a heterohexamer with two of each protein subunit, where Rabin8/RAB3IP and RAB11FIP3 simultaneously bind to RAB11A; the complex promotes preciliary trafficking and cilia growth. Forms a complex containing RAB11A, ASAP1, Rabin8/RAB3IP, RAP11FIP3 and ARF4; the complex promotes preciliary trafficking; the complex binds to RHO in photoreceptor cells and promotes RHO ciliary transport. Interacts (GTP-bound form) with WDR44; the interaction prevents RAB11A-RAB3IP-RAB11FIP3 complex formation. Mg(2+) is required as a cofactor.

The protein resides in the cell membrane. It localises to the endosome membrane. The protein localises to the recycling endosome membrane. It is found in the cleavage furrow. Its subcellular location is the cytoplasmic vesicle. The protein resides in the phagosome. It localises to the cytoplasmic vesicle membrane. The protein localises to the golgi apparatus. It is found in the trans-Golgi network. The catalysed reaction is GTP + H2O = GDP + phosphate + H(+). Regulated by guanine nucleotide exchange factors (GEFs) which promote the exchange of bound GDP for free GTP. Regulated by GTPase activating proteins (GAPs) which increase the GTP hydrolysis activity. Inhibited by GDP dissociation inhibitors (GDIs) which prevent Rab-GDP dissociation. The small GTPases Rab are key regulators of intracellular membrane trafficking, from the formation of transport vesicles to their fusion with membranes. Rabs cycle between an inactive GDP-bound form and an active GTP-bound form that is able to recruit to membranes different set of downstream effectors directly responsible for vesicle formation, movement, tethering and fusion. The small Rab GTPase RAB11A regulates endocytic recycling. Forms a functional Rab11/RAB11FIP3/dynein complex that regulates the movement of peripheral sorting endosomes (SE) along microtubule tracks toward the microtubule organizing center/centrosome, generating the endosomal recycling compartment (ERC). Acts as a major regulator of membrane delivery during cytokinesis. Together with MYO5B and RAB8A participates in epithelial cell polarization. Together with Rabin8/RAB3IP, RAB8A, the exocyst complex, PARD3, PRKCI, ANXA2, CDC42 and DNMBP promotes transcytosis of PODXL to the apical membrane initiation sites (AMIS), apical surface formation and lumenogenesis. Together with MYO5B participates in CFTR trafficking to the plasma membrane and TF (Transferrin) recycling in nonpolarized cells. Required in a complex with MYO5B and RAB11FIP2 for the transport of NPC1L1 to the plasma membrane. Participates in the sorting and basolateral transport of CDH1 from the Golgi apparatus to the plasma membrane. Regulates the recycling of FCGRT (receptor of Fc region of monomeric IgG) to basolateral membranes. May also play a role in melanosome transport and release from melanocytes. Promotes Rabin8/RAB3IP preciliary vesicular trafficking to mother centriole by forming a ciliary targeting complex containing Rab11, ASAP1, Rabin8/RAB3IP, RAB11FIP3 and ARF4, thereby regulating ciliogenesis initiation. On the contrary, upon LPAR1 receptor signaling pathway activation, interaction with phosphorylated WDR44 prevents Rab11-RAB3IP-RAB11FIP3 complex formation and cilia growth. Participates in the export of a subset of neosynthesized proteins through a Rab8-Rab10-Rab11-endososomal dependent export route via interaction with WDR44. The protein is Ras-related protein Rab-11A of Bos taurus (Bovine).